We begin with the raw amino-acid sequence, 518 residues long: DNA-(apurinic or apyrimidinic site) endonuclease 2 (518 aa).

Mg(2+) contacts are provided by asparagine 8 and glutamate 48. Tyrosine 156 is a catalytic residue. Positions 197, 199, 303, and 304 each coordinate Mg(2+). The active-site Proton donor/acceptor is aspartate 197. The active-site Proton acceptor is the histidine 304. Residues 355 to 405 (STLQHNNQTRVQTCQNKAQVRSTRPQPSQVGSSRGQKNLKSYFQPSPSCPQ) show a composition bias toward polar residues. The segment at 355 to 407 (STLQHNNQTRVQTCQNKAQVRSTRPQPSQVGSSRGQKNLKSYFQPSPSCPQAS) is disordered. Lysine 371 is covalently cross-linked (Glycyl lysine isopeptide (Lys-Gly) (interchain with G-Cter in ubiquitin)). A required for the interaction and colocalization with PCNA in nuclear foci in presence of oxidative-induced DNA damaging agents region spans residues 390 to 397 (QKNLKSYF). Residues cysteine 469, histidine 472, cysteine 495, and cysteine 509 each coordinate Zn(2+). Residues 469–518 (CGGHREPCVMRTVKKPGPNLGRRFYMCARPRGPPTDPSSRCNFFLWSRPS) form a GRF-type zinc finger.

Belongs to the DNA repair enzymes AP/ExoA family. In terms of assembly, interacts with PCNA; this interaction is triggered by reactive oxygen species and increased by misincorporation of uracil in nuclear DNA. Mg(2+) serves as cofactor. It depends on Mn(2+) as a cofactor. Ubiquitinated by the CUL9-RBX1 complex. Ubiquitinated by MKRN3 at Lys-371 leading to proteasomal degradation. Highly expressed in brain and kidney. Weakly expressed in the fetal brain.

The protein localises to the nucleus. Its subcellular location is the cytoplasm. It localises to the mitochondrion. The catalysed reaction is Exonucleolytic cleavage in the 3'- to 5'-direction to yield nucleoside 5'-phosphates.. Its activity is regulated as follows. 3'-5' exonuclease activity is activated by sodium and manganese. 3'-5' exonuclease and 3'-phosphodiesterase activities are stimulated in presence of PCNA. Functions as a weak apurinic/apyrimidinic (AP) endodeoxyribonuclease in the DNA base excision repair (BER) pathway of DNA lesions induced by oxidative and alkylating agents. Initiates repair of AP sites in DNA by catalyzing hydrolytic incision of the phosphodiester backbone immediately adjacent to the damage, generating a single-strand break with 5'-deoxyribose phosphate and 3'-hydroxyl ends. Also displays double-stranded DNA 3'-5' exonuclease, 3'-phosphodiesterase activities. Shows robust 3'-5' exonuclease activity on 3'-recessed heteroduplex DNA and is able to remove mismatched nucleotides preferentially. Also exhibits 3'-5' exonuclease activity on a single nucleotide gap containing heteroduplex DNA and on blunt-ended substrates. Shows fairly strong 3'-phosphodiesterase activity involved in the removal of 3'-damaged termini formed in DNA by oxidative agents. In the nucleus functions in the PCNA-dependent BER pathway. Plays a role in reversing blocked 3' DNA ends, problematic lesions that preclude DNA synthesis. Required for somatic hypermutation (SHM) and DNA cleavage step of class switch recombination (CSR) of immunoglobulin genes. Required for proper cell cycle progression during proliferation of peripheral lymphocytes. In Homo sapiens (Human), this protein is DNA-(apurinic or apyrimidinic site) endonuclease 2 (APEX2).